The primary structure comprises 357 residues: Sorbitol dehydrogenase (357 aa).

Residue A2 is modified to N-acetylalanine. C45 contacts Zn(2+). A substrate-binding site is contributed by Y51. H70 and E71 together coordinate Zn(2+). E156 lines the substrate pocket. NAD(+)-binding residues include I184, D204, and R209. 2 positions are modified to phosphoserine: S211 and S225. Residues 273 to 275 and 297 to 299 contribute to the NAD(+) site; these read VGL and VFR. Residues R299 and Y300 each coordinate substrate.

This sequence belongs to the zinc-containing alcohol dehydrogenase family. As to quaternary structure, homotetramer. The cofactor is Zn(2+).

It localises to the mitochondrion membrane. Its subcellular location is the cell projection. The protein localises to the cilium. The protein resides in the flagellum. The enzyme catalyses xylitol + NAD(+) = D-xylulose + NADH + H(+). It catalyses the reaction L-iditol + NAD(+) = keto-L-sorbose + NADH + H(+). The catalysed reaction is keto-D-fructose + NADH + H(+) = D-sorbitol + NAD(+). In terms of biological role, polyol dehydrogenase that catalyzes the reversible NAD(+)-dependent oxidation of various sugar alcohols. Is active with xylitol, L-iditol and D-sorbitol (D-glucitol) as substrates, leading to the C2-oxidized products D-xylulose, L-sorbose and D-fructose, respectively. Is a key enzyme in the polyol pathway that interconverts glucose and fructose via sorbitol, which constitutes an important alternate route for glucose metabolism. May play a role in sperm motility by using sorbitol as an alternative energy source for sperm motility. In Macaca fascicularis (Crab-eating macaque), this protein is Sorbitol dehydrogenase (SORD).